A 193-amino-acid polypeptide reads, in one-letter code: Interferon epsilon (193 aa).

The N-terminal stretch at 1–21 is a signal peptide; sequence MINKSFFEIMLVLLASSTGFS. An intrachain disulfide couples Cys-53 to Cys-163. A glycan (N-linked (GlcNAc...) asparagine) is linked at Asn-139.

The protein belongs to the alpha/beta interferon family.

It localises to the secreted. Type I interferon required for maintaining basal levels of IFN-regulated genes, including 2'-5'-oligoadenylate synthetase, IRF7 and ISG15, in the female reproductive tract. Directly mediates protection against viral and bacterial genital infections. This is Interferon epsilon (IFNE) from Sus scrofa (Pig).